The chain runs to 449 residues: tRNA-2-methylthio-N(6)-dimethylallyladenosine synthase (449 aa).

The 118-residue stretch at 7-124 (DAFYIHTFGC…LPLLIKQVQQ (118 aa)) folds into the MTTase N-terminal domain. The [4Fe-4S] cluster site is built by Cys16, Cys52, Cys87, Cys163, Cys167, and Cys170. A Radical SAM core domain is found at 149–379 (RSSSMSAFVP…IECQNRISAS (231 aa)). Residues 382–445 (SQAVGSVVEV…SATLLGEPLI (64 aa)) form the TRAM domain.

It belongs to the methylthiotransferase family. MiaB subfamily. As to quaternary structure, monomer. It depends on [4Fe-4S] cluster as a cofactor.

The protein resides in the cytoplasm. The enzyme catalyses N(6)-dimethylallyladenosine(37) in tRNA + (sulfur carrier)-SH + AH2 + 2 S-adenosyl-L-methionine = 2-methylsulfanyl-N(6)-dimethylallyladenosine(37) in tRNA + (sulfur carrier)-H + 5'-deoxyadenosine + L-methionine + A + S-adenosyl-L-homocysteine + 2 H(+). Functionally, catalyzes the methylthiolation of N6-(dimethylallyl)adenosine (i(6)A), leading to the formation of 2-methylthio-N6-(dimethylallyl)adenosine (ms(2)i(6)A) at position 37 in tRNAs that read codons beginning with uridine. In Chlorobium chlorochromatii (strain CaD3), this protein is tRNA-2-methylthio-N(6)-dimethylallyladenosine synthase.